The chain runs to 333 residues: Fructose-1,6-bisphosphatase class 1 (333 aa).

Mg(2+) is bound by residues glutamate 89, aspartate 110, leucine 112, and aspartate 113. Residues 113–116 (DGSS), asparagine 206, tyrosine 239, 257–259 (YLY), and lysine 269 each bind substrate. Glutamate 275 contributes to the Mg(2+) binding site.

This sequence belongs to the FBPase class 1 family. As to quaternary structure, homotetramer. Mg(2+) is required as a cofactor.

It is found in the cytoplasm. It catalyses the reaction beta-D-fructose 1,6-bisphosphate + H2O = beta-D-fructose 6-phosphate + phosphate. Its pathway is carbohydrate biosynthesis; gluconeogenesis. The protein is Fructose-1,6-bisphosphatase class 1 of Sodalis glossinidius (strain morsitans).